The following is an 827-amino-acid chain: MELNRRDFMKANAAAAAALAAGITLPVKNVYANDNSIKWDKAPCRFCGTGCSVLVGTQNGRMVASQGDPDAEVNRGLNCIKGYFLPKIIYGKDRLTSPMLRMKDGKYDKNGEFTPVSWDQAFTIMAEKFKKAIKEQGPNGVGMFTSGQSTIFEGVAKSKLFKAGLRSNNIDPNARHCMASAAVAFMRTFGMDEPMGCYDDIEKADAFVLWGSNMAEMHPILWSRISDRRLSKQDAKVAVLSTFEHRSFELADLPIVFKPQGDLAIMNYIANYLIQNNAIDQDFIQKHTKFKRGETDIGYGLRDNHPLEQAAKNAKTAGKMHDSSFEEFKQLVSEYTLDKAHELSGVPKDQLESLAKMYADPNLNIVSFWTMGFNQHVRGVWANHLIYNIHLLTGKISKPGCGPFSLTGQPSACGTAREVGTFIHRLPADLVVTNPEHVKTAEKLWKLPNGVIQTKVGLHAVAQDRALKDGKLNAYWVMCNNNMQCGPNINQERMPGWRDERNFIVVSDPYPTVSALSADLILPTAMWVEKEGAYGNAERRTQFWFQQVKAPGEAKSDLWQLVEFSKYFTTDEMWPAEVLAANPEYKGKTLFDVLYRNGQVDKFQVPADKAGYINDEADHFGFYLQKGLFEEYAEFGRGHGHDLASFETYHKARGLRWPVVDGKETLWRYREGYDPYVQAGEGVSFYGNKDKRAVILAVPYEPPAEAPDAEYDLWLSTGRVLEHWHSGSMTRRVPELHRSFPNNLVWMHPTDAQKRGLRHGDKVKVISRRGEMISHLDTRGRNKVPEGLIYTTFFDAGQLANKLTLDATDPISKETDFKKCAVKVVKA.

The segment at residues 1–32 (MELNRRDFMKANAAAAAALAAGITLPVKNVYA) is a signal peptide (tat-type signal). The region spanning 37–93 (IKWDKAPCRFCGTGCSVLVGTQNGRMVASQGDPDAEVNRGLNCIKGYFLPKIIYGKD) is the 4Fe-4S Mo/W bis-MGD-type domain. [4Fe-4S] cluster is bound by residues Cys44, Cys47, Cys51, and Cys79. Mo-bis(molybdopterin guanine dinucleotide)-binding positions include Lys81, Gln148, Asn173, Cys177, 210-217 (WGSNMAEM), 241-245 (STFEH), Met371, Gln375, Asn481, 507-508 (SD), Lys530, Asp557, and 717-726 (TGRVLEHWHS). Substrate is bound at residue Phe793. Mo-bis(molybdopterin guanine dinucleotide) is bound by residues Asn801 and Lys818.

This sequence belongs to the prokaryotic molybdopterin-containing oxidoreductase family. NasA/NapA/NarB subfamily. Component of the periplasmic nitrate reductase NapAB complex composed of NapA and NapB. The cofactor is [4Fe-4S] cluster. Mo-bis(molybdopterin guanine dinucleotide) serves as cofactor. Predicted to be exported by the Tat system. The position of the signal peptide cleavage has not been experimentally proven.

The protein localises to the periplasm. It carries out the reaction 2 Fe(II)-[cytochrome] + nitrate + 2 H(+) = 2 Fe(III)-[cytochrome] + nitrite + H2O. Its function is as follows. Catalytic subunit of the periplasmic nitrate reductase complex NapAB. Receives electrons from NapB and catalyzes the reduction of nitrate to nitrite. This chain is Periplasmic nitrate reductase, found in Glaesserella parasuis serovar 5 (strain SH0165) (Haemophilus parasuis).